Consider the following 189-residue polypeptide: UPF0301 protein A1E_00140 (189 aa).

The protein belongs to the UPF0301 (AlgH) family.

The chain is UPF0301 protein A1E_00140 from Rickettsia canadensis (strain McKiel).